Consider the following 591-residue polypeptide: A-type ATP synthase subunit A (591 aa).

233-240 is an ATP binding site; that stretch reads GPFGSGKT.

Belongs to the ATPase alpha/beta chains family. Has multiple subunits with at least A(3), B(3), C, D, E, F, H, I and proteolipid K(x).

Its subcellular location is the cell membrane. It carries out the reaction ATP + H2O + 4 H(+)(in) = ADP + phosphate + 5 H(+)(out). Functionally, component of the A-type ATP synthase that produces ATP from ADP in the presence of a proton gradient across the membrane. The A chain is the catalytic subunit. The chain is A-type ATP synthase subunit A from Metallosphaera sedula (strain ATCC 51363 / DSM 5348 / JCM 9185 / NBRC 15509 / TH2).